We begin with the raw amino-acid sequence, 305 residues long: Putative E3 ubiquitin-protein ligase SINAT1 (305 aa).

An RING-type zinc finger spans residues 57–93 (CPVCTNLMYPPIHQCPNGHTLCSSCKLRVQNTCPTCR). The SBD stretch occupies residues 107–300 (VAESLEVPCR…EELKLRVTGR (194 aa)). The SIAH-type zinc-finger motif lies at 110-170 (SLEVPCRYQN…LVDHLKDDHK (61 aa)). The Zn(2+) site is built by C115, C122, H134, C138, C145, C152, H164, and H169.

This sequence belongs to the SINA (Seven in absentia) family. As to quaternary structure, interacts with SINAT6. Interacts with ATG6 and TRAF1A. Interacts with WAV3. Interacts with FREE1. Interacts with ELC/VPS23A.

Its subcellular location is the endosome. The protein resides in the multivesicular body. It localises to the cytoplasmic vesicle. It is found in the autophagosome. The enzyme catalyses S-ubiquitinyl-[E2 ubiquitin-conjugating enzyme]-L-cysteine + [acceptor protein]-L-lysine = [E2 ubiquitin-conjugating enzyme]-L-cysteine + N(6)-ubiquitinyl-[acceptor protein]-L-lysine.. It participates in protein modification; protein ubiquitination. Its function is as follows. E3 ubiquitin-protein ligase that mediates ubiquitination and subsequent proteasomal degradation of target proteins. E3 ubiquitin ligases accept ubiquitin from an E2 ubiquitin-conjugating enzyme in the form of a thioester and then directly transfers the ubiquitin to targeted substrates. It probably triggers the ubiquitin-mediated degradation of different substrates. Mediates the proteasomal-dependent degradation of ATG6, a component of the autophagosome complex. Requires TRAF1A/MUSE14 and TRAF1B/MUSE13 to target ATG6 for ubiquitination and subsequent regulation of autophagosome assembly. Modulates directly the ubiquitination and proteasomal-dependent degradation of FREE1, a component of the ESCRT-I complex. Modulates directly the ubiquitination and proteasomal-dependent degradation of ELC/VPS23A, a component of the ESCRT-I complex. The sequence is that of Putative E3 ubiquitin-protein ligase SINAT1 from Arabidopsis thaliana (Mouse-ear cress).